Reading from the N-terminus, the 231-residue chain is MLEDLKRQVLEANLALPKHNLVTLTWGNVSAVDRERGVFVIKPSGVDYSVMTADDMVVVSIETGEVVEGTKKPSSDTPTHRLLYQAFPSIGGIVHTHSRHATIWAQAGQSIPATGTTHADYFYGTIPCTRKMTDAEINGEYEWETGNVIVETFEKQGIDAAQMPGVLVHSHGPFAWGKNAEDAVHNAIVLEEVAYMGIFCRQLAPQLPDMQQTLLDKHYLRKHGAKAYYGQ.

Substrate-binding positions include 27–28 (GN), 44–45 (SG), and 74–75 (SS). Zn(2+) contacts are provided by D76, H95, and H97. D120 functions as the Proton donor/acceptor in the catalytic mechanism. H171 is a binding site for Zn(2+). Residue Y229 is the Proton donor/acceptor of the active site.

Belongs to the aldolase class II family. AraD/FucA subfamily. As to quaternary structure, homotetramer. The cofactor is Zn(2+).

It carries out the reaction L-ribulose 5-phosphate = D-xylulose 5-phosphate. The protein operates within carbohydrate degradation; L-arabinose degradation via L-ribulose; D-xylulose 5-phosphate from L-arabinose (bacterial route): step 3/3. With respect to regulation, inhibited by glycolohydroxamate at concentration above 0.1 mM. In terms of biological role, involved in the degradation of L-arabinose. Catalyzes the interconversion of L-ribulose 5-phosphate (LRu5P) and D-xylulose 5-phosphate (D-Xu5P) via a retroaldol/aldol mechanism (carbon-carbon bond cleavage analogous to a class II aldolase reaction). The chain is L-ribulose-5-phosphate 4-epimerase AraD from Escherichia coli (strain K12).